The primary structure comprises 121 residues: NAD(P)H-quinone oxidoreductase subunit 3, chloroplastic (121 aa).

Transmembrane regions (helical) follow at residues 10–30 (FFIFLLLASVIPILAFSISKF), 65–85 (MFALVFVIFDVETVFLYPWAM), and 90–110 (LGLSAFIEALVFVFILIIGLV).

The protein belongs to the complex I subunit 3 family. In terms of assembly, NDH is composed of at least 16 different subunits, 5 of which are encoded in the nucleus.

The protein localises to the plastid. It localises to the chloroplast thylakoid membrane. It carries out the reaction a plastoquinone + NADH + (n+1) H(+)(in) = a plastoquinol + NAD(+) + n H(+)(out). The enzyme catalyses a plastoquinone + NADPH + (n+1) H(+)(in) = a plastoquinol + NADP(+) + n H(+)(out). In terms of biological role, NDH shuttles electrons from NAD(P)H:plastoquinone, via FMN and iron-sulfur (Fe-S) centers, to quinones in the photosynthetic chain and possibly in a chloroplast respiratory chain. The immediate electron acceptor for the enzyme in this species is believed to be plastoquinone. Couples the redox reaction to proton translocation, and thus conserves the redox energy in a proton gradient. The polypeptide is NAD(P)H-quinone oxidoreductase subunit 3, chloroplastic (Physcomitrium patens (Spreading-leaved earth moss)).